A 119-amino-acid chain; its full sequence is uncharacterized protein (119 aa).

This is an uncharacterized protein from Aquifex aeolicus (strain VF5).